The following is a 216-amino-acid chain: Dual specificity protein phosphatase VP2 (216 aa).

The tract at residues 1 to 50 (MHGNGGQPAAGGSESALSREGQPGPSGAAQGQVISNERSPRRYSTRTING) is disordered. Low complexity predominate over residues 21–32 (GQPGPSGAAQGQ). The active-site Phosphocysteine intermediate is C95. Residues 165 to 187 (DREADFTPSEEDGGTTSSDFDED) form a disordered region. Over residues 172–187 (PSEEDGGTTSSDFDED) the composition is skewed to acidic residues.

The protein belongs to the gyrovirus protein VP2 family.

It carries out the reaction O-phospho-L-tyrosyl-[protein] + H2O = L-tyrosyl-[protein] + phosphate. It catalyses the reaction O-phospho-L-seryl-[protein] + H2O = L-seryl-[protein] + phosphate. The catalysed reaction is O-phospho-L-threonyl-[protein] + H2O = L-threonyl-[protein] + phosphate. May act as a scaffold protein in virion assembly. May also play a role in intracellular signaling during viral replication. The sequence is that of Dual specificity protein phosphatase VP2 (VP2) from Gallus gallus (Chicken).